We begin with the raw amino-acid sequence, 754 residues long: MSVVEIEDGVFESTATIDNGSFGTRTIRFEAGRLAQQAAGAVVAYLDDETMLLSATTASKSPKEHFDFFPLTIDVEERMYAAGRIPGSFFRREGRPSTDAILTCRLIDRPLRPSFVSGLRNEIQVVVTVLSLDPKDLYDVLAINAASASTQISGLPFSGPVGGVRVALIDGQWVAFPTVEQLERAVFDMVVAGRKVGDDHKDVAIMMVEAEATENVIELVAGGAGAPTETVVAEGLEAAKPFIAVLCDAQAALAGAAGKETAEYPLFPDYGDDVYYSVASVATEALSEALTIAGKNERNDRTDEIKVEVLNRLAEQYAGREKEIGAAYRSLTKKLVRQRILTDHFRIDGRGVTDIRALSAEVAVVPRAHGSALFERGETQIMGVTTLDMVKMAQQIDSLGPETSKRYMHHYNFPPYSTGETGRVGSPKRREIGHGALAERALVPVLPSVEEFPYAIRQVSEALGSNGSTSMGSVCASTLSLLNAGVPLKAPVAGIAMGLVSDDIEIDGKTERRFVTLTDILGAEDAFGDMDFKCAGTKDFVTALQLDTKLDGIPSQVLAGALAQAKDARITILEVMAEAIDTPDEMSPYAPRITTIKVPVDKIGEVIGPKGKMINSITEETGASISIEDDGTVFVGASNGEAAQAAIDKINAIANPQLPKVGERFLGTVVKTTDFGAFVSLLPGRDGLVHISKLGRGKRINKVEDVAKVGDKLRVEIADIDNRGKISLVLVAEESETAADAPADAPVDAATTSS.

Mg(2+)-binding residues include D525 and D531. The 60-residue stretch at 591-650 (PRITTIKVPVDKIGEVIGPKGKMINSITEETGASISIEDDGTVFVGASNGEAAQAAIDKI) folds into the KH domain. An S1 motif domain is found at 662–731 (GERFLGTVVK…NRGKISLVLV (70 aa)).

The protein belongs to the polyribonucleotide nucleotidyltransferase family. Mg(2+) serves as cofactor.

The protein localises to the cytoplasm. It carries out the reaction RNA(n+1) + phosphate = RNA(n) + a ribonucleoside 5'-diphosphate. In terms of biological role, involved in mRNA degradation. Catalyzes the phosphorolysis of single-stranded polyribonucleotides processively in the 3'- to 5'-direction. This is Polyribonucleotide nucleotidyltransferase from Mycolicibacterium vanbaalenii (strain DSM 7251 / JCM 13017 / BCRC 16820 / KCTC 9966 / NRRL B-24157 / PYR-1) (Mycobacterium vanbaalenii).